The primary structure comprises 853 residues: Putative dipeptidyl aminopeptidase C14C4.15c (853 aa).

Residues 1 to 26 (MNAYEGDTLNNHGKSSTRQHWRKRSA) form a disordered region. At 1–65 (MNAYEGDTLN…AKKRRRKKHR (65 aa)) the chain is on the cytoplasmic side. Basic residues predominate over residues 15 to 25 (SSTRQHWRKRS). A helical; Signal-anchor for type II membrane protein membrane pass occupies residues 66-86 (YIYLAVCLFFLASVLSCAIIF). Over 87 to 853 (RFYLHTNREN…SGHFHHALYC (767 aa)) the chain is Lumenal. Residues N96, N102, N472, N483, and N613 are each glycosylated (N-linked (GlcNAc...) asparagine). Residues S719, D795, and H828 each act as charge relay system in the active site.

The protein belongs to the peptidase S9B family.

The protein resides in the vacuole membrane. The chain is Putative dipeptidyl aminopeptidase C14C4.15c from Schizosaccharomyces pombe (strain 972 / ATCC 24843) (Fission yeast).